The following is a 472-amino-acid chain: MASQLLNVPHLAFFPKISYASVFSTLKPSFFHSTSTRRALKSSPSSRIINLQAVAETSSEIESNSVTETTVPLTLRQICQGFVPEHILHRMEEIGFVFPTDIQREALPTLFTGRDCILHAQTGSGKTLTYLLLIFSLINPQRSSVQAVIVVPTRELGMQVTKVARMLAAKSEIDVKGCTVMALLDGGTLRRHKSWLKAEPPAILVATVASLCHMLEKHIFRIDSVRVLVVDEVDFLFYSSKQVGSVRKLLTSFSSCDKRQTVFASASIPQHKHFVHDCIQQKWTKRDVVHVHVSAIMPMPLCLLHRFVMCEKTNKHQVLLALLESDAPESAIIFVGEQSEKSKKAGNDPSTTLLMEFLKTSYKGSLEILLLEGDMNFNSRAASLTEIRQGGGFLLVSTDIAARGIDLPETTHIFNFDLPQTVTDYLHRAGRAGRKPFSDRKCIVANLITSEERFVLQRYENELMFSCEEMML.

A chloroplast-targeting transit peptide spans 1 to 54 (MASQLLNVPHLAFFPKISYASVFSTLKPSFFHSTSTRRALKSSPSSRIINLQAV). The Q motif signature appears at 76–104 (RQICQGFVPEHILHRMEEIGFVFPTDIQR). The Helicase ATP-binding domain maps to 107–286 (LPTLFTGRDC…DCIQQKWTKR (180 aa)). Residue 120–127 (AQTGSGKT) coordinates ATP. A DEAD box motif is present at residues 231 to 234 (DEVD). Residues 314-472 (NKHQVLLALL…LMFSCEEMML (159 aa)) enclose the Helicase C-terminal domain.

Belongs to the DEAD box helicase family.

Its subcellular location is the plastid. It localises to the chloroplast. The enzyme catalyses ATP + H2O = ADP + phosphate + H(+). The protein is DEAD-box ATP-dependent RNA helicase 58, chloroplastic (RH58) of Arabidopsis thaliana (Mouse-ear cress).